The following is a 214-amino-acid chain: UPF0502 protein Acid345_3645 (214 aa).

The protein belongs to the UPF0502 family.

The protein is UPF0502 protein Acid345_3645 of Koribacter versatilis (strain Ellin345).